The primary structure comprises 263 residues: 3-methyl-2-oxobutanoate hydroxymethyltransferase (263 aa).

Residues D44 and D83 each coordinate Mg(2+). 3-methyl-2-oxobutanoate contacts are provided by residues 44–45 (DS), D83, and K112. A Mg(2+)-binding site is contributed by E114. E181 functions as the Proton acceptor in the catalytic mechanism.

It belongs to the PanB family. Homodecamer; pentamer of dimers. The cofactor is Mg(2+).

The protein localises to the cytoplasm. It catalyses the reaction 3-methyl-2-oxobutanoate + (6R)-5,10-methylene-5,6,7,8-tetrahydrofolate + H2O = 2-dehydropantoate + (6S)-5,6,7,8-tetrahydrofolate. Its pathway is cofactor biosynthesis; (R)-pantothenate biosynthesis; (R)-pantoate from 3-methyl-2-oxobutanoate: step 1/2. Catalyzes the reversible reaction in which hydroxymethyl group from 5,10-methylenetetrahydrofolate is transferred onto alpha-ketoisovalerate to form ketopantoate. The protein is 3-methyl-2-oxobutanoate hydroxymethyltransferase of Nitrosospira multiformis (strain ATCC 25196 / NCIMB 11849 / C 71).